The following is a 1012-amino-acid chain: DNA polymerase catalytic subunit (1012 aa).

It belongs to the DNA polymerase type-B family.

The protein localises to the host nucleus. The catalysed reaction is DNA(n) + a 2'-deoxyribonucleoside 5'-triphosphate = DNA(n+1) + diphosphate. In Human herpesvirus 6A (strain Uganda-1102) (HHV-6 variant A), this protein is DNA polymerase catalytic subunit (U38).